The chain runs to 589 residues: MAERTHACGRVTVEAIGQTVQLKGWVQKRRDLGGLIFIDLRDRTGIVQVVFSPETSKEALEVAETIRGEYVLHVEGTVVARGAGAINENMATGQIEVQATKVTVLNAAKTTPIIIADDTDASEDVRLKYRYLDLRRPVMYNTFKMRHDVTKTIRNFLDTEEFLEVETPILTKSTPEGARDYLVPSRVHDGEFYALPQSPQLFKQLLMVGGFERYYQVARCFRDEDLRADRQPEFTQIDIEASFLTQEEILDMMERMMTKVMKDVKGVEISVPFPRMTYADAMARYGSDKPDTRFEMELTDLSEFAAGCGFKVFTGAVENGGQVKAINAKGAASKYSRKDIDALTEFVKVYGAKGLAWLKVEEDGLKGPIAKFFNEEEANVIMTTLEASAGDLLLFVADKKSVVADSLGALRLRLGKELELIDENKFNFLWVTDWPLLEYDEEANRYFAAHHPFTMPFREDVELLETAPEKARAQAYDLVLNGYELGGGSLRIYERDVQEKMFKALGFTQEEAREQFGFLLEAFEYGTPPHGGIALGLDRLVMLLAGRTNLRDTIAFPKTASASCLLTDAPSPVAGAQLEELHLKLNVKE.

E176 is a binding site for L-aspartate. The segment at 200–203 (QLFK) is aspartate. Residue R222 participates in L-aspartate binding. Residues 222–224 (RDE) and Q231 each bind ATP. H450 contacts L-aspartate. ATP is bound at residue E484. An L-aspartate-binding site is contributed by R491. 536–539 (GLDR) is a binding site for ATP.

This sequence belongs to the class-II aminoacyl-tRNA synthetase family. Type 1 subfamily. As to quaternary structure, homodimer.

It is found in the cytoplasm. It catalyses the reaction tRNA(Asx) + L-aspartate + ATP = L-aspartyl-tRNA(Asx) + AMP + diphosphate. Its function is as follows. Aspartyl-tRNA synthetase with relaxed tRNA specificity since it is able to aspartylate not only its cognate tRNA(Asp) but also tRNA(Asn). Reaction proceeds in two steps: L-aspartate is first activated by ATP to form Asp-AMP and then transferred to the acceptor end of tRNA(Asp/Asn). The polypeptide is Aspartate--tRNA(Asp/Asn) ligase (Bacillus cytotoxicus (strain DSM 22905 / CIP 110041 / 391-98 / NVH 391-98)).